A 197-amino-acid polypeptide reads, in one-letter code: Xanthine phosphoribosyltransferase (197 aa).

2 residues coordinate xanthine: leucine 20 and asparagine 27. Position 128-132 (128-132 (ANGQA)) interacts with 5-phospho-alpha-D-ribose 1-diphosphate. Lysine 156 serves as a coordination point for xanthine.

This sequence belongs to the purine/pyrimidine phosphoribosyltransferase family. Xpt subfamily. In terms of assembly, homodimer.

The protein localises to the cytoplasm. It carries out the reaction XMP + diphosphate = xanthine + 5-phospho-alpha-D-ribose 1-diphosphate. The protein operates within purine metabolism; XMP biosynthesis via salvage pathway; XMP from xanthine: step 1/1. Converts the preformed base xanthine, a product of nucleic acid breakdown, to xanthosine 5'-monophosphate (XMP), so it can be reused for RNA or DNA synthesis. This Bacillus cereus (strain ZK / E33L) protein is Xanthine phosphoribosyltransferase.